A 333-amino-acid polypeptide reads, in one-letter code: MKFRNLFFAAVAGSAVAAPLAKEQKKRDSVFQWIGANESGAEFGENNLPGVWGTDYIFPDVSAITTLIDKGMNIFRIQFKMERLVPDSMTGAYDEAYLQNLTTVVNAVTDAGVHAILDPHNYGRFNGEIMSTPSDFQTFWKNLAGQFQSNSLVIFDTNNEYHDMDQELVLNLNQAAIDGIREAGATEQYIFVEGNSYTGAWTWTDVNDNMKNLEDPQDKIVYQMHQYLDSDGSGTSETCVSGTIGQERVTSATQWLKDNKKVGIIGEFAGGNNDQCKTAVKGMLDYLAENTDVWKGALWWAAGPWWGDYMYSLEPPNGVAFTGMLDVLQAYLG.

A signal peptide spans 1–17 (MKFRNLFFAAVAGSAVA). N37 and N100 each carry an N-linked (GlcNAc...) asparagine glycan. E160 (proton donor) is an active-site residue. The active-site Nucleophile is the E267.

It belongs to the glycosyl hydrolase 5 (cellulase A) family.

The protein resides in the secreted. It catalyses the reaction Endohydrolysis of (1-&gt;4)-beta-D-glucosidic linkages in cellulose, lichenin and cereal beta-D-glucans.. Its function is as follows. Has endoglucanase activity on substrates containing beta-1,4 glycosidic bonds, like in carboxymethylcellulose (CMC), hydroxyethylcellulose (HEC) and beta-glucan. Involved in the degradation of complex natural cellulosic substrates. This is Probable endo-beta-1,4-glucanase B (eglB) from Aspergillus oryzae (strain ATCC 42149 / RIB 40) (Yellow koji mold).